We begin with the raw amino-acid sequence, 175 residues long: ATP synthase subunit b (175 aa).

Residues 22–44 form a helical membrane-spanning segment; it reads MLVQLFFFLILLALLKKFAWGPL.

This sequence belongs to the ATPase B chain family. As to quaternary structure, F-type ATPases have 2 components, F(1) - the catalytic core - and F(0) - the membrane proton channel. F(1) has five subunits: alpha(3), beta(3), gamma(1), delta(1), epsilon(1). F(0) has three main subunits: a(1), b(2) and c(10-14). The alpha and beta chains form an alternating ring which encloses part of the gamma chain. F(1) is attached to F(0) by a central stalk formed by the gamma and epsilon chains, while a peripheral stalk is formed by the delta and b chains.

It localises to the cell membrane. Functionally, f(1)F(0) ATP synthase produces ATP from ADP in the presence of a proton or sodium gradient. F-type ATPases consist of two structural domains, F(1) containing the extramembraneous catalytic core and F(0) containing the membrane proton channel, linked together by a central stalk and a peripheral stalk. During catalysis, ATP synthesis in the catalytic domain of F(1) is coupled via a rotary mechanism of the central stalk subunits to proton translocation. Component of the F(0) channel, it forms part of the peripheral stalk, linking F(1) to F(0). In Oceanobacillus iheyensis (strain DSM 14371 / CIP 107618 / JCM 11309 / KCTC 3954 / HTE831), this protein is ATP synthase subunit b.